Reading from the N-terminus, the 394-residue chain is Flap endonuclease 1-A (394 aa).

Residues 1–105 (MGIKGLTGLL…GVLSKRLERR (105 aa)) are N-domain. Mg(2+) is bound at residue Asp34. Positions 47 and 71 each coordinate DNA. Mg(2+) contacts are provided by Asp87, Glu159, Glu161, Asp180, and Asp182. Residues 123–254 (DVDRFSRRTV…KSALKLIREY (132 aa)) form an I-domain region. DNA is bound at residue Glu159. Residues Gly232 and Asp234 each contribute to the DNA site. Asp234 lines the Mg(2+) pocket. Residues 341–349 (QQGRLDGFF) are interaction with PCNA. Positions 356–375 (KAAAPAPVGKAKGKGKVDAK) are disordered.

The protein belongs to the XPG/RAD2 endonuclease family. FEN1 subfamily. Interacts with PCNA. Three molecules of FEN1 bind to one PCNA trimer with each molecule binding to one PCNA monomer. PCNA stimulates the nuclease activity without altering cleavage specificity. Mg(2+) serves as cofactor. In terms of processing, phosphorylated. Phosphorylation upon DNA damage induces relocalization to the nuclear plasma.

The protein localises to the nucleus. Its subcellular location is the nucleolus. The protein resides in the nucleoplasm. It localises to the mitochondrion. Structure-specific nuclease with 5'-flap endonuclease and 5'-3' exonuclease activities involved in DNA replication and repair. During DNA replication, cleaves the 5'-overhanging flap structure that is generated by displacement synthesis when DNA polymerase encounters the 5'-end of a downstream Okazaki fragment. It enters the flap from the 5'-end and then tracks to cleave the flap base, leaving a nick for ligation. Also involved in the long patch base excision repair (LP-BER) pathway, by cleaving within the apurinic/apyrimidinic (AP) site-terminated flap. Acts as a genome stabilization factor that prevents flaps from equilibrating into structures that lead to duplications and deletions. Also possesses 5'-3' exonuclease activity on nicked or gapped double-stranded DNA, and exhibits RNase H activity. Also involved in replication and repair of rDNA and in repairing mitochondrial DNA. The polypeptide is Flap endonuclease 1-A (Laccaria bicolor (strain S238N-H82 / ATCC MYA-4686) (Bicoloured deceiver)).